The sequence spans 406 residues: 4-hydroxy-3-methylbut-2-en-1-yl diphosphate synthase (ferredoxin) (406 aa).

[4Fe-4S] cluster-binding residues include Cys-314, Cys-317, Cys-348, and Glu-355.

It belongs to the IspG family. The cofactor is [4Fe-4S] cluster.

It catalyses the reaction (2E)-4-hydroxy-3-methylbut-2-enyl diphosphate + 2 oxidized [2Fe-2S]-[ferredoxin] + H2O = 2-C-methyl-D-erythritol 2,4-cyclic diphosphate + 2 reduced [2Fe-2S]-[ferredoxin] + H(+). The protein operates within isoprenoid biosynthesis; isopentenyl diphosphate biosynthesis via DXP pathway; isopentenyl diphosphate from 1-deoxy-D-xylulose 5-phosphate: step 5/6. Functionally, converts 2C-methyl-D-erythritol 2,4-cyclodiphosphate (ME-2,4cPP) into 1-hydroxy-2-methyl-2-(E)-butenyl 4-diphosphate. This chain is 4-hydroxy-3-methylbut-2-en-1-yl diphosphate synthase (ferredoxin), found in Prochlorococcus marinus (strain MIT 9313).